The following is a 549-amino-acid chain: Glutamyl-tRNA(Gln) amidotransferase subunit B, chloroplastic/mitochondrial (549 aa).

It belongs to the GatB/GatE family. GatB subfamily. In terms of assembly, subunit of the heterotrimeric GatCAB amidotransferase (AdT) complex, composed of A, B and C subunits.

The protein localises to the mitochondrion. It localises to the plastid. Its subcellular location is the chloroplast. It catalyses the reaction L-glutamyl-tRNA(Gln) + L-glutamine + ATP + H2O = L-glutaminyl-tRNA(Gln) + L-glutamate + ADP + phosphate + H(+). Allows the formation of correctly charged Gln-tRNA(Gln) through the transamidation of misacylated Glu-tRNA(Gln) in chloroplasts and mitochondria. The reaction takes place in the presence of glutamine and ATP through an activated gamma-phospho-Glu-tRNA(Gln). The sequence is that of Glutamyl-tRNA(Gln) amidotransferase subunit B, chloroplastic/mitochondrial from Ricinus communis (Castor bean).